The following is a 625-amino-acid chain: Probable potassium transport system protein Kup 2 (625 aa).

12 helical membrane-spanning segments follow: residues 15–35, 52–72, 98–118, 134–154, 164–184, 212–232, 246–266, 284–304, 336–356, 365–385, 394–414, and 417–437; these read LSFA…LYAF, ILSL…LVIV, GGWL…DGML, LSPN…FFLF, IGVY…ILGF, FALF…ALFA, WFAV…AFVL, FLPV…QAII, VYLP…VVIF, AYGI…GIIA, FKIL…AGNI, and LLTG…VMYT.

Belongs to the HAK/KUP transporter (TC 2.A.72) family.

Its subcellular location is the cell inner membrane. It catalyses the reaction K(+)(in) + H(+)(in) = K(+)(out) + H(+)(out). Transport of potassium into the cell. Likely operates as a K(+):H(+) symporter. The sequence is that of Probable potassium transport system protein Kup 2 from Legionella pneumophila (strain Paris).